Reading from the N-terminus, the 821-residue chain is Leucine--tRNA ligase (821 aa).

The 'HIGH' region signature appears at 40–50 (PYPSGRIHMGH). A 'KMSKS' region motif is present at residues 586-590 (KMSKS). Lysine 589 contacts ATP.

This sequence belongs to the class-I aminoacyl-tRNA synthetase family.

Its subcellular location is the cytoplasm. The enzyme catalyses tRNA(Leu) + L-leucine + ATP = L-leucyl-tRNA(Leu) + AMP + diphosphate. The protein is Leucine--tRNA ligase of Aliarcobacter butzleri (strain RM4018) (Arcobacter butzleri).